We begin with the raw amino-acid sequence, 157 residues long: Succinate dehydrogenase assembly factor 2-B, mitochondrial (157 aa).

The transit peptide at 1 to 22 (MLSQWFRGRHLVVRSALFSRRR) directs the protein to the mitochondrion.

This sequence belongs to the SDHAF2 family. In terms of assembly, interacts with the flavoprotein subunit within the SDH catalytic dimer.

It is found in the mitochondrion matrix. Its function is as follows. Plays an essential role in the assembly of succinate dehydrogenase (SDH), an enzyme complex (also referred to as respiratory complex II) that is a component of both the tricarboxylic acid (TCA) cycle and the mitochondrial electron transport chain, and which couples the oxidation of succinate to fumarate with the reduction of ubiquinone (coenzyme Q) to ubiquinol. Required for flavinylation (covalent attachment of FAD) of the flavoprotein subunit of the SDH catalytic dimer. This is Succinate dehydrogenase assembly factor 2-B, mitochondrial from Drosophila mojavensis (Fruit fly).